The sequence spans 785 residues: Pre-rRNA-processing protein TSR1 homolog (785 aa).

The interval 1–59 is disordered; the sequence is MSTTGHRAGVFKKPSKPHKSWKGKRTKGEITSENRGREGVKQLTRSAHSTHRTISKDAR. The span at 9–25 shows a compositional bias: basic residues; sequence GVFKKPSKPHKSWKGKR. The span at 26 to 40 shows a compositional bias: basic and acidic residues; the sequence is TKGEITSENRGREGV. Residues 83–243 enclose the Bms1-type G domain; that stretch reads APCLVTVVSL…LRILNETKKK (161 aa). Positions 307 to 426 are disordered; it reads PHPLKAHNKT…GETTASEMMF (120 aa). A compositionally biased stretch (acidic residues) spans 376-409; that stretch reads LDDEDDEDEEDSDEDMDDSDNEEVEDDSEEEEPM.

Belongs to the TRAFAC class translation factor GTPase superfamily. Bms1-like GTPase family. TSR1 subfamily.

The protein resides in the nucleus. It localises to the nucleolus. Required during maturation of the 40S ribosomal subunit in the nucleolus. This is Pre-rRNA-processing protein TSR1 homolog (tag-151) from Caenorhabditis elegans.